A 577-amino-acid chain; its full sequence is MKRTHNCNQLNISNVNQEVTLKGWIKKIRKMGQITFIDLRDFYGITQIVVGENKQELINNLKPEYVISITGKVIERKSKNADIPTGEIEIEVKNIELINKSELTPFVIENDVEVSEETRMSYRYLDLRRQKIQNNMLLRAKVNSIIRKEFEADNFVEVETPYFGKSTPEGARDFLVPSRLNKNTFYALPQSPQLYKQLLMVSGFDKYYQIVRCFRDEDLRNDRQPEFTQLDMEMSFASATEVQDQIEKVIKKIFLEVKGIDFKEKLIKMPFREAIDLYGSDKPDIRFDLKINTLNEIFDKTQIKLFESFKENKLSIRGICVEELLSKKQLEILTETAKQKSFNNLAFAKFENGTWSGSIASSLSDGEKQALIKQFNIKDKATILLNVGKYEKISDMLGAVRNKVAEILNLADPNDYKLLWIIDFPLYEWSDEESRYVAAHNPFTMPNIKSIDDFETNKEDAIADSYDLVLNGFELGSGGVRITDSGIQQRMFEAVGLDDETIEKNFGWFINAYKYGAPNHAGFAFGIDRVIMLLTHSESIRDVIAFPKNSKGIDMMNDAPSYVEDNQLSELSIKTIK.

An L-aspartate-binding site is contributed by glutamate 169. The aspartate stretch occupies residues 193–196 (QLYK). Arginine 215 provides a ligand contact to L-aspartate. ATP-binding positions include 215–217 (RDE) and glutamine 224. Histidine 440 serves as a coordination point for L-aspartate. Residue glutamate 474 participates in ATP binding. Arginine 481 is a binding site for L-aspartate. 526 to 529 (GIDR) contacts ATP.

The protein belongs to the class-II aminoacyl-tRNA synthetase family. Type 1 subfamily. As to quaternary structure, homodimer.

The protein resides in the cytoplasm. The catalysed reaction is tRNA(Asp) + L-aspartate + ATP = L-aspartyl-tRNA(Asp) + AMP + diphosphate. Its function is as follows. Catalyzes the attachment of L-aspartate to tRNA(Asp) in a two-step reaction: L-aspartate is first activated by ATP to form Asp-AMP and then transferred to the acceptor end of tRNA(Asp). The sequence is that of Aspartate--tRNA ligase from Mesoplasma florum (strain ATCC 33453 / NBRC 100688 / NCTC 11704 / L1) (Acholeplasma florum).